The primary structure comprises 714 residues: SEC14 domain and spectrin repeat-containing protein 1 (714 aa).

In terms of domain architecture, CRAL-TRIO spans 1–153 (MEASCILPVL…EFGGSLLYDH (153 aa)). Spectrin repeat units lie at residues 275–381 (SQLE…NVLQ), 384–497 (YEFH…LKML), and 503–605 (FKCE…HRLE). Positions 691–714 (EAEQRLEEEEEEEEAALEVEPRES) are disordered. Positions 696–707 (LEEEEEEEEAAL) are enriched in acidic residues.

The protein belongs to the SOLO family.

Functionally, may act as the primary docking protein directing membrane turnover and assembly of the transient receptor potential channels trpc4 and trpc5. Binds phospholipids. The protein is SEC14 domain and spectrin repeat-containing protein 1 (sestd1) of Danio rerio (Zebrafish).